The following is a 320-amino-acid chain: Putative S-adenosyl-L-methionine-dependent methyltransferase MAP_4078 (320 aa).

Residues Asp132 and 161-162 (DL) each bind S-adenosyl-L-methionine. A disordered region spans residues 294–320 (PPHDIEDAIPQTRFVAAQRTERTRPDR).

Belongs to the UPF0677 family.

Functionally, exhibits S-adenosyl-L-methionine-dependent methyltransferase activity. This is Putative S-adenosyl-L-methionine-dependent methyltransferase MAP_4078 from Mycolicibacterium paratuberculosis (strain ATCC BAA-968 / K-10) (Mycobacterium paratuberculosis).